We begin with the raw amino-acid sequence, 126 residues long: Protein ApaG (126 aa).

Positions 2-126 (SDPRYQVDVS…FRLAVPGALH (125 aa)) constitute an ApaG domain.

This is Protein ApaG from Pseudomonas fluorescens (strain ATCC BAA-477 / NRRL B-23932 / Pf-5).